Consider the following 1452-residue polypeptide: MNESHEAGKNSSTNVEEREEEVLRLARQFTEQSSYSTAGQTPFAAEAGSALDPNGERFNARAWCKAMLQMHIGDKEAHPLRTLGVAFSNLNVHGFGSDTDYQKSVGNVWLKTLSLARIAFGQKQRKVDILQNLEGLVEAGEMLVVLGPPGSGCSTFLKTIAGETYGFHVDKNSNINFQGIAKQMAHEFRGEAIYTAEVDVHFPKLTVGDTLYFAARARTPRHIPGGVNATQYAGHMRDVIMAMFGISHTKNTIVGNDFIRGVSGGERKRVSIAEACLSNAPLQCWDNSTRGLDSANAIEFCKTLRMQADINGTTACVSLYQAPQAAYDYFDKVLVLYEGREIYFGPTSMAKHYFLQMGFVCPDRQTDADFLTSMTSHLERVVQPGYEDRVPRTPDEFAARWKASPQRAQLMQHIKSYNAKFALDGEYLDKFKQSRRAQQAKAQRVSSPYTLSYVQQVKLCLWRGYQRLKADPSVTISSLFGNTIISLVIASIFYNLKADTSTFFQRGALLFFAVLMNALGCGLEMLTLYAQRGIIEKHSRYALYHPSAEAFSSMIMDLPYKILNAITSNIVLYFMTNLRRAPGAFFFFVFTSFILTLTMSMFFRSMASLSRSLVQVLPFSAVLLLGLSMYTGFAIPTGYMLGWARWIAYINPISYGFESLMINEFHNRDFPCMDYVPSGPGYTDVGLNNRVCSTVRSVPGQAFVNGNAYIESAYSYTASHKWRNIGVIFAYMFLLGAVYLVATDFITEKKPKGEILVFPRGHKALKKGKSDEDLEGGGGRSATVEKIGSDGLAMIERQTAIFQWKDVCFDIKIGKENCRILDHVDGWVKPGILTALMGVSGAGKTTLLDVLATRTTMGIISGEMLVDGQPRDESFQRKTGYAQQQDLHLSTATVREALEFSALLRQSAHVPRQEKIDYVTEVIKLLDMTEYADAVIGVPGEGLNVEQRKRLTIGVELAARPQLLLFLDEPTSGLDSQTSWAILDLLDKLKKNGQAILCTIHQPSAMLFQRFDRLLFLQAGGRTVYFGEIGQNSQILIDYFVRNGAPPCPPDANPAEWMLDVIGAAPGSHTSINWFETWRRSPEYARVQEHLAELKHERRHQTNLFRTTSGQKREDKDSYREFAAPFWAQLYQVQVRVFQQIWRSPTYINSKTALCVLSALFVGFSLFHTPNTIQGLQNQMFGIFMLLTLFGQLIQQIMPHFVAQRALYEVRDRPAKTYSWKAFLIANIVVELPWNSLMSVLMFLCWYYPIGLYRNAEPTDAVHLRGTQMWLMIWTFLLFSSTFAHFMIAAFDAAENAGNLGNLLFLLCLLFCGVLATPDQLPRFWIFMYRVSPFTYLVSGMLSVGISNTNVTCADNEYLRFDPVNGTCGEYMGSYMSNLGGYLADEMATANCSFCPIKETNVFLGRVSSSYSDIWRNFGLMWVFIVFNIFAACSLYWWVRVPRDKKPVAKAE.

The segment at 1–20 (MNESHEAGKNSSTNVEEREE) is disordered. Asparagine 2, asparagine 10, asparagine 228, asparagine 287, and asparagine 311 each carry an N-linked (GlcNAc...) asparagine glycan. An ABC transporter 1 domain is found at 110–363 (LKTLSLARIA…FLQMGFVCPD (254 aa)). 6 helical membrane-spanning segments follow: residues 474–494 (VTIS…SIFY), 508–528 (ALLF…MLTL), 554–574 (MIMD…VLYF), 583–603 (GAFF…SMFF), 616–636 (VLPF…FAIP), and 725–745 (IGVI…ATDF). The ABC transporter 2 domain maps to 802-1044 (FQWKDVCFDI…ILIDYFVRNG (243 aa)). Residue 838–845 (GVSGAGKT) coordinates ATP. Helical transmembrane passes span 1153–1173 (ALCV…PNTI), 1183–1203 (IFML…HFVA), 1223–1243 (FLIA…VLMF), 1271–1291 (LMIW…IAAF), and 1297–1317 (AGNL…VLAT). Asparagine 1350, asparagine 1365, and asparagine 1391 each carry an N-linked (GlcNAc...) asparagine glycan. The helical transmembrane segment at 1418–1438 (FGLMWVFIVFNIFAACSLYWW) threads the bilayer.

The protein belongs to the ABC transporter superfamily. ABCG family. PDR (TC 3.A.1.205) subfamily.

It localises to the membrane. Its function is as follows. ABC transporter that seems not to be involved in the efflux of toxic substances, at least not the classical compounds such as itraconazole, amphotericin B, voriconazole, posaconazole, ravuconazole, or echinocandins. This chain is ABC multidrug transporter A, found in Aspergillus fumigatus (Neosartorya fumigata).